The sequence spans 294 residues: MVDAEKIKKLREMTDSGFLDCKKALEATKNDLNAAVKWLQENGKAKAAKKADRITAEGLVAAFSNDKYGVIIEINSETDFVAKNQKFKDLVNKIGQELLKHDFYKYKNIIEEVKIGNETLAELVASASATIGEKLTFRRAEQVKKFNSKQVIGVYNHFDGQKAAVLIIENGTEDMAKQLSMHITAMNPLFLDEKEVPEKEIKKLRSEFEKDEQIQLKPEKIRPKIIEGMINKKLSETTFTLQEFVVEPGQSIKQYMNSKNSFPISKIRYEVGEGIEKQVVDFASEVANQMKNKA.

The involved in Mg(2+) ion dislocation from EF-Tu stretch occupies residues 78 to 81; sequence TDFV.

Belongs to the EF-Ts family.

Its subcellular location is the cytoplasm. Its function is as follows. Associates with the EF-Tu.GDP complex and induces the exchange of GDP to GTP. It remains bound to the aminoacyl-tRNA.EF-Tu.GTP complex up to the GTP hydrolysis stage on the ribosome. This is Elongation factor Ts from Mycoplasma mobile (strain ATCC 43663 / 163K / NCTC 11711) (Mesomycoplasma mobile).